The following is a 316-amino-acid chain: N-acetylmuramic acid 6-phosphate etherase (316 aa).

The segment at 1–25 (MAVFDPDLQPSSDRGHLLTEQSNQR) is disordered. The region spanning 66–229 (VANRLRAGGR…STAVMVKLGK (164 aa)) is the SIS domain. The active-site Proton donor is Glu94. Residue Glu125 is part of the active site.

Belongs to the GCKR-like family. MurNAc-6-P etherase subfamily. As to quaternary structure, homodimer.

The enzyme catalyses N-acetyl-D-muramate 6-phosphate + H2O = N-acetyl-D-glucosamine 6-phosphate + (R)-lactate. It functions in the pathway amino-sugar metabolism; N-acetylmuramate degradation. Specifically catalyzes the cleavage of the D-lactyl ether substituent of MurNAc 6-phosphate, producing GlcNAc 6-phosphate and D-lactate. This Synechococcus sp. (strain CC9605) protein is N-acetylmuramic acid 6-phosphate etherase.